We begin with the raw amino-acid sequence, 75 residues long: Disintegrin CTF-II (75 aa).

Residues 1-75 (ELLEEGEDCY…SDDCPRWNDL (75 aa)) enclose the Disintegrin domain. Cystine bridges form between Cys-9–Cys-24, Cys-11–Cys-19, Cys-18–Cys-41, Cys-32–Cys-38, Cys-37–Cys-62, and Cys-50–Cys-69. Residues 54-56 (RGD) carry the Cell attachment site motif.

This sequence belongs to the venom metalloproteinase (M12B) family. P-II subfamily. P-IIa sub-subfamily. In terms of assembly, monomer (disintegrin). As to expression, expressed by the venom gland.

It localises to the secreted. Inhibits fibrinogen interaction with platelet receptors, and inhibits aggregation induced by ADP, thrombin, collagen and platelet-activating factor. Acts by binding to the alpha-IIb/beta-3 (ITGA2B/ITGB3) on the platelet surface. This chain is Disintegrin CTF-II, found in Protobothrops flavoviridis (Habu).